Consider the following 2193-residue polypeptide: Genome polyprotein (2193 aa).

The N-myristoyl glycine; by host moiety is linked to residue G2. At G2 to Q1503 the chain is on the cytoplasmic side. The tract at residues Q565–V582 is amphipathic alpha-helix. Active-site for protease 2A activity residues include H880 and D898. Zn(2+) is bound by residues C915 and C917. C969 (for protease 2A activity) is an active-site residue. 2 residues coordinate Zn(2+): C975 and H977. A membrane-binding region spans residues S1109–Q1181. The interval S1109–T1247 is oligomerization. The RNA-binding stretch occupies residues A1130–Q1134. Positions E1213–N1369 constitute an SF3 helicase domain. Zn(2+) contacts are provided by C1377, C1389, and C1394. The C4-type; degenerate zinc finger occupies C1377–C1394. Residues E1421–V1428 form an RNA-binding region. The oligomerization stretch occupies residues L1432–Q1437. Residues A1504–Y1519 lie within the membrane without spanning it. Residues K1520–F2193 lie on the Cytoplasmic side of the membrane. The residue at position 1529 (Y1529) is an O-(5'-phospho-RNA)-tyrosine. Residues G1549–F1727 enclose the Peptidase C3 domain. Active-site for protease 3C activity residues include H1588, E1619, and C1695. In terms of domain architecture, RdRp catalytic spans G1958–L2074. Mg(2+)-binding residues include D1964 and D2060.

Belongs to the picornaviruses polyprotein family. In terms of assembly, interacts with capsid protein VP1 and capsid protein VP3 to form heterotrimeric protomers. As to quaternary structure, interacts with capsid protein VP0, and capsid protein VP3 to form heterotrimeric protomers. Five protomers subsequently associate to form pentamers which serve as building blocks for the capsid. Interacts with capsid protein VP2, capsid protein VP3 and capsid protein VP4 following cleavage of capsid protein VP0. Interacts with capsid protein VP1 and capsid protein VP3 in the mature capsid. Interacts with host CD55; this interaction promotes virus attachment to the host cell and subsequent internalization. In terms of assembly, interacts with capsid protein VP0 and capsid protein VP1 to form heterotrimeric protomers. Five protomers subsequently associate to form pentamers which serve as building blocks for the capsid. Interacts with capsid protein VP4 in the mature capsid. Interacts with protein 2C; this interaction may be important for virion morphogenesis. Interacts with host CD55; this interaction promotes virus attachment to the host cell and subsequent internalization. As to quaternary structure, interacts with capsid protein VP1 and capsid protein VP3. Homodimer. In terms of assembly, homohexamer; forms a hexameric ring structure with 6-fold symmetry characteristic of AAA+ ATPases. Interacts (via N-terminus) with host RTN3 (via reticulon domain); this interaction is important for viral replication. Interacts with capsid protein VP3; this interaction may be important for virion morphogenesis. As to quaternary structure, interacts with protein 3CD. Homodimer. Interacts with host GBF1. Interacts (via GOLD domain) with host ACBD3 (via GOLD domain); this interaction allows the formation of a viral protein 3A/ACBD3 heterotetramer with a 2:2 stoichiometry, which will stimulate the recruitment of host PI4KB in order to synthesize PI4P at the viral RNA replication sites. In terms of assembly, interacts with RNA-directed RNA polymerase. As to quaternary structure, interacts with protein 3AB and with RNA-directed RNA polymerase. Interacts with Viral protein genome-linked and with protein 3CD. Mg(2+) is required as a cofactor. Specific enzymatic cleavages in vivo by the viral proteases yield processing intermediates and the mature proteins. In terms of processing, myristoylation is required for the formation of pentamers during virus assembly. Further assembly of 12 pentamers and a molecule of genomic RNA generates the provirion. Post-translationally, during virion maturation, immature virions are rendered infectious following cleavage of VP0 into VP4 and VP2. This maturation seems to be an autocatalytic event triggered by the presence of RNA in the capsid and it is followed by a conformational change infectious virion. Myristoylation is required during RNA encapsidation and formation of the mature virus particle. In terms of processing, VPg is uridylylated by the polymerase into VPg-pUpU. This acts as a nucleotide-peptide primer for the genomic RNA replication.

The protein localises to the virion. The protein resides in the host cytoplasm. It localises to the host cytoplasmic vesicle membrane. It is found in the host nucleus. The enzyme catalyses a ribonucleoside 5'-triphosphate + H2O = a ribonucleoside 5'-diphosphate + phosphate + H(+). It carries out the reaction Selective cleavage of Tyr-|-Gly bond in the picornavirus polyprotein.. It catalyses the reaction RNA(n) + a ribonucleoside 5'-triphosphate = RNA(n+1) + diphosphate. The catalysed reaction is Selective cleavage of Gln-|-Gly bond in the poliovirus polyprotein. In other picornavirus reactions Glu may be substituted for Gln, and Ser or Thr for Gly.. With respect to regulation, replication or transcription is subject to high level of random mutations by the nucleotide analog ribavirin. In terms of biological role, forms an icosahedral capsid of pseudo T=3 symmetry with capsid proteins VP2 and VP3. The capsid is 300 Angstroms in diameter, composed of 60 copies of each capsid protein and enclosing the viral positive strand RNA genome. Capsid protein VP1 mainly forms the vertices of the capsid. Capsid protein VP1 interacts with host cell receptor to provide virion attachment to target host cells. This attachment induces virion internalization. Tyrosine kinases are probably involved in the entry process. After binding to its receptor, the capsid undergoes conformational changes. Capsid protein VP1 N-terminus (that contains an amphipathic alpha-helix) and capsid protein VP4 are externalized. Together, they shape a pore in the host membrane through which viral genome is translocated to host cell cytoplasm. Its function is as follows. Forms an icosahedral capsid of pseudo T=3 symmetry with capsid proteins VP2 and VP3. The capsid is 300 Angstroms in diameter, composed of 60 copies of each capsid protein and enclosing the viral positive strand RNA genome. Lies on the inner surface of the capsid shell. After binding to the host receptor, the capsid undergoes conformational changes. Capsid protein VP4 is released, Capsid protein VP1 N-terminus is externalized, and together, they shape a pore in the host membrane through which the viral genome is translocated into the host cell cytoplasm. Functionally, component of immature procapsids, which is cleaved into capsid proteins VP4 and VP2 after maturation. Allows the capsid to remain inactive before the maturation step. In terms of biological role, cysteine protease that cleaves viral polyprotein and specific host proteins. It is responsible for the autocatalytic cleavage between the P1 and P2 regions, which is the first cleavage occurring in the polyprotein. Also cleaves the host translation initiation factor EIF4G1, in order to shut down the capped cellular mRNA translation. Inhibits the host nucleus-cytoplasm protein and RNA trafficking by cleaving host members of the nuclear pores. Counteracts stress granule formation probably by antagonizing its assembly or promoting its dissassembly. Its function is as follows. Plays an essential role in the virus replication cycle by acting as a viroporin. Creates a pore in the host endoplasmic reticulum and as a consequence releases Ca2+ in the cytoplasm of infected cell. In turn, high levels of cytoplasmic calcium may trigger membrane trafficking and transport of viral ER-associated proteins to viroplasms, sites of viral genome replication. Induces and associates with structural rearrangements of intracellular membranes. Displays RNA-binding, nucleotide binding and NTPase activities. May play a role in virion morphogenesis and viral RNA encapsidation by interacting with the capsid protein VP3. Functionally, localizes the viral replication complex to the surface of membranous vesicles. Together with protein 3CD binds the Cis-Active RNA Element (CRE) which is involved in RNA synthesis initiation. Acts as a cofactor to stimulate the activity of 3D polymerase, maybe through a nucleid acid chaperone activity. In terms of biological role, localizes the viral replication complex to the surface of membranous vesicles. It inhibits host cell endoplasmic reticulum-to-Golgi apparatus transport and causes the disassembly of the Golgi complex, possibly through GBF1 interaction. This would result in depletion of MHC, trail receptors and IFN receptors at the host cell surface. Plays an essential role in viral RNA replication by recruiting ACBD3 and PI4KB at the viral replication sites, thereby allowing the formation of the rearranged membranous structures where viral replication takes place. Its function is as follows. Acts as a primer for viral RNA replication and remains covalently bound to viral genomic RNA. VPg is uridylylated prior to priming replication into VPg-pUpU. The oriI viral genomic sequence may act as a template for this. The VPg-pUpU is then used as primer on the genomic RNA poly(A) by the RNA-dependent RNA polymerase to replicate the viral genome. During genome replication, the VPg-RNA linkage is removed by the host TDP2, thereby accelerating replication. During the late stage of the replication cycle, host TDP2 is excluded from sites of viral RNA synthesis and encapsidation, allowing for the generation of progeny virions. Involved in the viral replication complex and viral polypeptide maturation. It exhibits protease activity with a specificity and catalytic efficiency that is different from protease 3C. Protein 3CD lacks polymerase activity. Protein 3CD binds to the 5'UTR of the viral genome. Functionally, replicates the viral genomic RNA on the surface of intracellular membranes. May form linear arrays of subunits that propagate along a strong head-to-tail interaction called interface-I. Covalently attaches UMP to a tyrosine of VPg, which is used to prime RNA synthesis. The positive stranded RNA genome is first replicated at virus induced membranous vesicles, creating a dsRNA genomic replication form. This dsRNA is then used as template to synthesize positive stranded RNA genomes. ss(+)RNA genomes are either translated, replicated or encapsidated. In terms of biological role, major viral protease that mediates proteolytic processing of the polyprotein. Cleaves host EIF5B, contributing to host translation shutoff. Also cleaves host PABPC1, contributing to host translation shutoff. Cleaves host NLRP1, triggers host N-glycine-mediated degradation of the autoinhibitory NLRP1 N-terminal fragment. The chain is Genome polyprotein from Echovirus 12 (strain Travis).